We begin with the raw amino-acid sequence, 248 residues long: Metallo-beta-lactamase type 2 (248 aa).

The N-terminal stretch at 1–21 is a signal peptide; that stretch reads MKGLKGLLVLALGFTGLQVFG. Zn(2+) contacts are provided by His-97, His-99, Asp-101, His-160, and Cys-179. Lys-182 is a substrate binding site. His-221 provides a ligand contact to Zn(2+).

The protein belongs to the metallo-beta-lactamase superfamily. Class-B beta-lactamase family. Monomer. Zn(2+) serves as cofactor.

Its subcellular location is the periplasm. The enzyme catalyses a beta-lactam + H2O = a substituted beta-amino acid. Its function is as follows. Confers resistance to the different beta-lactams antibiotics (penicillin, cephalosporin and carbapenem) via the hydrolysis of the beta-lactam ring. The chain is Metallo-beta-lactamase type 2 (blaB7) from Elizabethkingia meningoseptica (Chryseobacterium meningosepticum).